The primary structure comprises 196 residues: Probable GTP-binding protein EngB (196 aa).

Residues Asn-22–Lys-195 form the EngB-type G domain. Residues Gly-30 to Ser-37, Gly-57 to Thr-61, Asp-75 to Gly-78, Thr-142 to Asp-145, and Phe-174 to Ala-176 each bind GTP. Residues Ser-37 and Thr-59 each coordinate Mg(2+).

Belongs to the TRAFAC class TrmE-Era-EngA-EngB-Septin-like GTPase superfamily. EngB GTPase family. Requires Mg(2+) as cofactor.

Necessary for normal cell division and for the maintenance of normal septation. This Limosilactobacillus reuteri (strain DSM 20016) (Lactobacillus reuteri) protein is Probable GTP-binding protein EngB.